A 309-amino-acid chain; its full sequence is Short-chain dehydrogenase/reductase ARMGADRAFT_1048226 (309 aa).

The NADP(+) site is built by Lys-64, Asp-86, Asn-113, and Lys-145. Catalysis depends on Ser-167, which acts as the Proton donor. NADP(+) contacts are provided by Tyr-196 and Lys-200. Catalysis depends on Tyr-196, which acts as the Proton acceptor. The active-site Lowers pKa of active site Tyr is Lys-200.

The protein belongs to the short-chain dehydrogenases/reductases (SDR) family.

Its pathway is secondary metabolite biosynthesis. In terms of biological role, short-chain dehydrogenase/reductase, part of the gene cluster that mediates the biosynthesis of melleolides, a range of antifungal and phytotoxic polyketide derivatives composed of an orsellinic acid (OA) moiety esterified to various sesquiterpene alcohols. The first step in melleolides biosynthesis is performed by the delta(6)-protoilludene synthase PRO1 which catalyzes the cyclization of farnesyl diphosphate to protoilludene. The orsellinic acid synthase armB produces OA by condensing acetyl-CoA with 3 malonyl-CoA units in a three-round chain elongation reaction folowed by a C2-C7 ring closure. ArmB further catalyzes the trans-esterification of OA to the various sesquiterpene alcohols resulting from the hydroxylation of protoilludene. The melleolides cluster also includes 5 cytochrome P450 monooxygenases, 4 NAD(+)-dependent oxidoreductases, one flavin-dependent oxidoreductase, and one O-methyltransferase. The cytochrome P450 monooxygenases may be involved in protoilludene hydroxylation to elaborate melleolides with multiple alcohol groups, such as melleolide D, which carries alcohol functionalities at C-4, C-5, C-10, and C-13. The role of the NAD(+)-dependent enzymes remains unknown. Numerous melleolides, including arnamial, show 5'-O-methylation of the aromatic moiety which may be catalyzed by the methyltransferase encoded in the cluster. The flavin-dependent oxidoreductase might represent the dehydrogenase yielding the aldehyde in position 1 of arnamial and other melleolides. Finally, several halogenase localized outside of the cluster, are able to catalyze the transfer of a single chlorine atom to the melleolide backbone, resulting in a 6'-chloromelleolide product. This chain is Short-chain dehydrogenase/reductase ARMGADRAFT_1048226, found in Armillaria gallica (Bulbous honey fungus).